The sequence spans 66 residues: MIIPVRCFTCGRPLGHLYPIFKRRVLAGERPGEVLDSLGVYRYCCRRTLLSHVEWIDDVLAYERRS.

The Zn(2+) site is built by C7, C10, C44, and C45.

It belongs to the archaeal Rpo10/eukaryotic RPB10 RNA polymerase subunit family. In terms of assembly, part of the RNA polymerase complex. It depends on Zn(2+) as a cofactor.

Its subcellular location is the cytoplasm. The catalysed reaction is RNA(n) + a ribonucleoside 5'-triphosphate = RNA(n+1) + diphosphate. DNA-dependent RNA polymerase (RNAP) catalyzes the transcription of DNA into RNA using the four ribonucleoside triphosphates as substrates. The polypeptide is DNA-directed RNA polymerase subunit Rpo10 (Pyrobaculum neutrophilum (strain DSM 2338 / JCM 9278 / NBRC 100436 / V24Sta) (Thermoproteus neutrophilus)).